A 1007-amino-acid polypeptide reads, in one-letter code: Retinoblastoma-related protein (1007 aa).

The tract at residues 406-604 (TPVTTAMTTA…EKGSSMYNSL (199 aa)) is domain A. A pocket region spans residues 406–856 (TPVTTAMTTA…NEIFIPAVKP (451 aa)). Residues 605 to 725 (IVARAALSAE…PGREGETCAE (121 aa)) are spacer. A disordered region spans residues 644–665 (PVPSLQKRESSPGQNGDIRSPK). Residues 726-856 (TGINIFFSKI…NEIFIPAVKP (131 aa)) form a domain B region.

This sequence belongs to the retinoblastoma protein (RB) family.

The protein resides in the nucleus. Its function is as follows. Regulator of biological processes that recruits a histone deacetylase to control gene transcription. May play a role in the entry into mitosis, negatively regulating the cell proliferation. Formation of stable complexes with geminiviridae replication-associated proteins may create a cellular environment which favors viral DNA replication. The polypeptide is Retinoblastoma-related protein (RBR) (Vitis vinifera (Grape)).